The following is a 396-amino-acid chain: Protein ANTAGONIST OF LIKE HETEROCHROMATIN PROTEIN 1 (396 aa).

Basic residues-rich tracts occupy residues 1-12 (MAPVKQKKKNKK) and 20-29 (KLAKNKEKKR). The disordered stretch occupies residues 1-29 (MAPVKQKKKNKKKPLDKAKKLAKNKEKKR). The short motif at 6–13 (QKKKNKKK) is the Nuclear localization signal element. The region spanning 183–348 (IDTTHIIMTL…IILVCCLLHN (166 aa)) is the DDE Tnp4 domain.

The protein belongs to the HARBI1 family. Interacts with core components of POLYCOMB REPRESSIVE COMPLEX 2 (PRC2), a PcG protein complex with H3K27me3 histone methyltransferase activity. Associates with plant-specific PRC2 accessory components such as MSI1, EMF2, VRN2, FIE and CLF. Requires a divalent metal cation as cofactor. As to expression, expressed in roots, inflorescence stems, seedlings, leaves, flower buds, inflorescences, and siliques.

The protein localises to the nucleus. Its function is as follows. Transposase-derived protein that may have nuclease activity. Antagonist of polycomb-group (PcG) protein-mediated chromatin silencing, probably by preventing the association of POLYCOMB REPRESSIVE COMPLEX 2 (PRC2) with its accessory components. Needed for full reactivation of several floral homeotic genes that are repressed by PcG. This chain is Protein ANTAGONIST OF LIKE HETEROCHROMATIN PROTEIN 1, found in Arabidopsis thaliana (Mouse-ear cress).